The primary structure comprises 208 residues: MAHGDEPEEGEAYGEGYMAPPAHRLRAGTLLIANTNLFEPTFRRSVIFIVEHNDGGTLGVVLNRPSETAVYNVLPQWAKLAGKPKTMFVGGPVKRDAALCLATLRAGVSIDGVKGLRHVAGRMAMVDLDAEPEDIAPLVEGIRVFAGYSGWTIGQLEGEVERDDWIVLSALPSDVLTDASEDLWAKVLRRQPLPLSLLATHPIDVSRN.

It belongs to the UPF0301 (AlgH) family.

The polypeptide is UPF0301 protein MAB_4928c (Mycobacteroides abscessus (strain ATCC 19977 / DSM 44196 / CCUG 20993 / CIP 104536 / JCM 13569 / NCTC 13031 / TMC 1543 / L948) (Mycobacterium abscessus)).